The primary structure comprises 1901 residues: Methylcytosine dioxygenase tet3 (1901 aa).

Residues 58-99 (SNKKRKRCGVCVPCLRKEPCGACYNCVNRSTSHQICKMRKCE) form a CXXC-type zinc finger. Positions 65, 68, 71, 77, 80, 83, 93, and 98 each coordinate Zn(2+). 4 disordered regions span residues 434–455 (KNALPVPQSPRQTSWEQNKKSS), 602–658 (WWVP…EGSA), 751–787 (KDQCPTPSTHDTSSSSGQGDSANQHTNVSDVPGQNDL), and 808–867 (DFSL…PVSR). Composition is skewed to polar residues over residues 442 to 455 (SPRQTSWEQNKKSS) and 602 to 614 (WWVPSSQQAPVSK). Residues 640–652 (KPQRKQVQIKKPK) show a composition bias toward basic residues. Over residues 758–771 (STHDTSSSSGQGDS) the composition is skewed to low complexity. Over residues 847 to 867 (ENSTKPATHSNPALSNNPVSR) the composition is skewed to polar residues. Positions 957, 959, 1017, 1043, and 1045 each coordinate Zn(2+). Residue R1085 coordinates 2-oxoglutarate. Zn(2+)-binding residues include C1095, C1097, C1113, C1122, and C1182. Residue C1198 coordinates 2-oxoglutarate. H1204 is a Zn(2+) binding site. Residues H1206 and D1208 each contribute to the Fe cation site. Residue H1240 coordinates 2-oxoglutarate. 4 disordered regions span residues 1282 to 1338 (SEPA…QQTK), 1457 to 1501 (YGSE…VETT), 1591 to 1624 (SNAPGLKDKQWPPYGTDVSVRQHDSLDSQSPGKV), and 1680 to 1745 (SATP…DEEI). The segment covering 1291-1325 (RQLEAKKAAAEKKKLQKEKLVSPDKTKQEPSDKKT) has biased composition (basic and acidic residues). Residues 1326–1338 (CQQNPGVPQQQTK) are compositionally biased toward polar residues. Over residues 1465–1474 (SFRRSSEVPH) the composition is skewed to basic and acidic residues. Polar residues predominate over residues 1477-1487 (SLQNPSSQKSV). 2 stretches are compositionally biased toward polar residues: residues 1680–1693 (SATPSDRSSITPCS) and 1702–1719 (SFPNPTVNSLKTDSSQNH). H1780 serves as a coordination point for Fe cation. 1795-1797 (RIS) contributes to the 2-oxoglutarate binding site.

Belongs to the TET family. The cofactor is Fe(2+). Zn(2+) serves as cofactor.

It is found in the nucleus. Its subcellular location is the chromosome. It catalyses the reaction a 5-methyl-2'-deoxycytidine in DNA + 2-oxoglutarate + O2 = a 5-hydroxymethyl-2'-deoxycytidine in DNA + succinate + CO2. The enzyme catalyses a 5-hydroxymethyl-2'-deoxycytidine in DNA + 2-oxoglutarate + O2 = a 5-formyl-2'-deoxycytidine in DNA + succinate + CO2 + H2O. It carries out the reaction a 5-formyl-2'-deoxycytidine in DNA + 2-oxoglutarate + O2 = a 5-carboxyl-2'-deoxycytidine in DNA + succinate + CO2 + H(+). Dioxygenase that catalyzes the conversion of the modified genomic base 5-methylcytosine (5mC) into 5-hydroxymethylcytosine (5hmC) and plays a key role in epigenetic chromatin reprogramming during embryonic development. Conversion of 5mC into 5hmC probably constitutes the first step in cytosine demethylation. Selectively binds to the promoter region of target genes and contributes to regulate the expression of numerous developmental genes, including pax6, rax, sox9 and six3. May also contribute to the regulation of target genes in ways that do not require its enzyme activity. This Xenopus tropicalis (Western clawed frog) protein is Methylcytosine dioxygenase tet3.